Reading from the N-terminus, the 443-residue chain is Protein UIP5 (443 aa).

The first 27 residues, 1-27, serve as a signal peptide directing secretion; that stretch reads MSRDVRAEKLAISLLILSLFLIFQLVA. The Perinuclear space segment spans residues 28-398; it reads EIYLNNGDQY…LFKVVLTIWH (371 aa). A helical transmembrane segment spans residues 399-420; the sequence is YSEILLLIMGIYLFSACIRVFQ. Over 421 to 443 the chain is Cytoplasmic; the sequence is RRFKKIRSRRKRAGSHSVGLLPM.

The protein localises to the nucleus membrane. In Saccharomyces cerevisiae (strain ATCC 204508 / S288c) (Baker's yeast), this protein is Protein UIP5 (UIP5).